Here is a 120-residue protein sequence, read N- to C-terminus: Proteinase inhibitor (120 aa).

The first 19 residues, methionine 1–alanine 19, serve as a signal peptide directing secretion. A disulfide bridge links cysteine 43 with cysteine 65.

The protein belongs to the protease inhibitor I38 family. In terms of assembly, monomer.

It localises to the periplasm. Its function is as follows. Inhibitor of the extracellular proteases A, B, and C of E.chrysanthemi and the S.marcescens 50 kDa extracellular protease. It forms a non-covalent bond with the proteases and may prevent autocatalytic cleavage of the proteases zymogen in the periplasm. The polypeptide is Proteinase inhibitor (inh) (Dickeya chrysanthemi (Pectobacterium chrysanthemi)).